The following is a 483-amino-acid chain: Aspartyl/glutamyl-tRNA(Asn/Gln) amidotransferase subunit B (483 aa).

This sequence belongs to the GatB/GatE family. GatB subfamily. As to quaternary structure, heterotrimer of A, B and C subunits.

It catalyses the reaction L-glutamyl-tRNA(Gln) + L-glutamine + ATP + H2O = L-glutaminyl-tRNA(Gln) + L-glutamate + ADP + phosphate + H(+). The catalysed reaction is L-aspartyl-tRNA(Asn) + L-glutamine + ATP + H2O = L-asparaginyl-tRNA(Asn) + L-glutamate + ADP + phosphate + 2 H(+). Its function is as follows. Allows the formation of correctly charged Asn-tRNA(Asn) or Gln-tRNA(Gln) through the transamidation of misacylated Asp-tRNA(Asn) or Glu-tRNA(Gln) in organisms which lack either or both of asparaginyl-tRNA or glutaminyl-tRNA synthetases. The reaction takes place in the presence of glutamine and ATP through an activated phospho-Asp-tRNA(Asn) or phospho-Glu-tRNA(Gln). The chain is Aspartyl/glutamyl-tRNA(Asn/Gln) amidotransferase subunit B from Herpetosiphon aurantiacus (strain ATCC 23779 / DSM 785 / 114-95).